Reading from the N-terminus, the 926-residue chain is Beta-mannosidase A (926 aa).

An N-terminal signal peptide occupies residues 1-21 (MHVKAETVLALLTPAPPSVVG). N-linked (GlcNAc...) asparagine glycans are attached at residues Asn-40, Asn-242, Asn-277, Asn-311, and Asn-342. Residue Glu-474 is the Proton donor of the active site. N-linked (GlcNAc...) asparagine glycosylation is found at Asn-532, Asn-603, Asn-626, Asn-653, Asn-733, Asn-756, Asn-785, Asn-793, Asn-819, and Asn-905.

Belongs to the glycosyl hydrolase 2 family. Beta-mannosidase A subfamily. Homodimer.

It is found in the secreted. It carries out the reaction Hydrolysis of terminal, non-reducing beta-D-mannose residues in beta-D-mannosides.. Its pathway is glycan metabolism; N-glycan degradation. Functionally, exoglycosidase that cleaves the single beta-linked mannose residue from the non-reducing end of beta-mannosidic oligosaccharides of various complexity and length. Involved in the degradation of polymeric mannan and galactomannan. The polypeptide is Beta-mannosidase A (mndA) (Aspergillus fumigatus (strain ATCC MYA-4609 / CBS 101355 / FGSC A1100 / Af293) (Neosartorya fumigata)).